The sequence spans 3184 residues: MEAEDLSKAEDRNEDPGSKNEGQLAAVQPDVPHGGQSSSPTALWDMLERKFLEYQQLTHKSPIERQKSLLSLLPLFLKAWEHSVGIICFPSLQRLAEDVSDQLAQQLQKALVGKPAEQARLAAGQLLWWKGDVDQDGYLLLKSVYVLTGTDSETLGRVAESGLPALLLQCLYLFFVFPLDKDELLESDLQVQKMFVQMLLNICSDSQGLEGLLSGSELQSLLIATTCLREHSCCFWKEPTFCVLRAISKAQNLSIIQYLQATDCVRLSLQNLSRLTDTLPAPEVSEAVSLILGFVKDSYPVSSALFLEFENSEGYPLLLKVLLRYDGLTQSEVDPHLEELLGLVVWLTTCGRSELKVFDSITYPQLEGFKFHHEASGVTVKNLQAFQVLQNVFHKASDSVLCIQVLSVIRTMWAWNARNFFLLEWTLQPISQFVEIMPLKPAPVQEHFFQLLEALVFELHYVPHEILRKVQHLIKESPGPSCTLMALQSILSIAGGDPLFTDIFRDSGLLGLLLAQLRKQAKIMRKSGNKVSTPGVQDPERELTCVMLRIVVTLLKGSVRNAVVLKDHGMVPFIKIFLDDECYREASLSILEQLSAINAEEYMSIIVGALCSSTQGELQLKLDLLKSLLRILVTPKGRAAFRVSSGFNGLLSLLSDLEGSLQEPPLQAWGAVSPRQTLELVLYTLCAVSAALHWDPVNGYFFRRNGLFEKLAEDLCLLGCFGALEEEGNLLRSWVDTKARPFADLLGTAFSSSGSLPPRIQSCLQILGFLDSMASGTLHLRGDLKESLRTKQGPVVDVQKGETGSDPQRNFKQWPDLEERMDEGDAAIMHPGVVCIMVRLLPRLYHEDHPQLSEEIQCSLASHIQSLVKSEKNRQVMCEAGLLGTLMASCHRALVTSGSPLHSRLIRIFEKLASQAIEPDVLRQFLGLGIPSSLSATTKILDSSHTHRGNPGCSGSQTAQGLAEGPWPAAPDAGLHPGVTQAPQPLGESQDSTTALQTALSLISMTSPRNLQPQRAALAPSFVEFDMSVEGYGCLFIPTLSTVMGTSTEYSVSGGIGTGATRPFPPPGGLTFSCWFLISRHGAATEGHPLRFLTLVRHLARTEQPFVCFSVSLCPDDLSLVVSTEEKEFQPLDVMEPEDDSEPSAGCQLQVRCGQLLACGQWHHLAVVVTKEMKRHCTVSTCLDGQVIGSAKMLYIQALPGPFLSMDPSAFVDVYGYIATPRVWKQKSSLIWRLGPTYLFEEAISMETLEVINKLGPRYCGNFQAVHVQGEDLDSEATPFVAEERVSFGLHIASSSITSVADIRNAYNEVDSRLIAKEMNISSRDNAMPVFLLRNCAGHLSGSLRTIGAVAVGQLGVRVFHSSPAASSLDFIGGPAILLGLISLATDDHTMYAAVKVLHSVLTSNAMCDFLMQHICGYQIMAFLLRKKASLLNHRIFQLILSVAGTVELGFRSSAITNTGVFQHILCNFELWMNTADNLELSLFSHLLEILQSPREGPRNAEAAHQAQLIPKLIFLFNEPSLIPSKISTIIGILACQLRGHFSTQDLLRIGLFVVYTLKPSSVNERQICMDGALDPSLPAGSQTSGKTIWLRNQLLEMLLSVISSPQLHLSSESKEEMFLKLGPDWFLLLLQGHLHASTTVLALKLLLYFLASPSLRTRFRDGLCAGSWVERSTEGVDIVMDNLKSQSPLPEQSPCLLPGFRVLNDFLAHHVHIPEVYLIVSTFFLQTPLTELMDGPKDSLDAMLQWLLQRHHQEEVLQAGLCTEGALLLLEMLKATMSQPLAGSEDGAWAQTFPASVLQFLSLVHRTYPQDPAWRAPEFLQTLAIAAFPLGAQKGVGAESTRNTSSPEAAAEGDSTVEGLQAPTKAHPARRKLREFTQLLLRELLLGASSPKQWLPLEVLLEASPDHATSQQKRDFQSEVLLSAMELFHMTSGGDAAMFRDGKEPQPSAEAAAAPSLANISCFTQKLVEKLYSGMFSADPRHILLFILEHIMVVIETASSQRDTVLSTLYSSLNKVILYCLSKPQQSLSECLGLLSILGFLQEHWDVVFATYNSNISFLLCLMHCLLLLNERSYPEGFGLEPKPRMSTYHQVFLSPNEDVKEKREDLPSLSDVQHNIQKTVQTLWQQLVAQRQQTLEDAFKIDLSVKPGEREVKIEEVTPLWEETMLKAWQHYLASEKKSLASRSNVAHHSKVTLWSGSLSSAMKLMPGRQAKDPECKTEDFVSCIENYRRRGQELYASLYKDHVQRRKCGNIKAANAWARIQEQLFGELGLWSQGEETKPCSPWELDWREGPARMRKRIKRLSPLEALSSGRHKESQDKNDHISQTNAENQDELTLREAEGEPDEVGVDCTQLTFFPALHESLHSEDFLELCRERQVILQELLDKEKVTQKFSLVIVQGHLVSEGVLLFGHQHFYICENFTLSPTGDVYCTRHCLSNISDPFIFNLCSKDRSTDHYSCQCHSYADMRELRQARFLLQDIALEIFFHNGYSKFLVFYNNDRSKAFKSFCSFQPSLKGKATSEDTLSLRRYPGSDRIMLQKWQKRDISNFEYLMYLNTAAGRTCNDYMQYPVFPWVLADYTSETLNLANPKIFRDLSKPMGAQTKERKLKFIQRFKEVEKTEGDMTVQCHYYTHYSSAIIVASYLVRMPPFTQAFCALQGGSFDVADRMFHSVKSTWESASRENMSDVRELTPEFFYLPEFLTNCNGVEFGCMQDGTVLGDVQLPPWADGDPRKFISLHRKALESDFVSANLHHWIDLIFGYKQQGPAAVDAVNIFHPYFYGDRMDLSSITDPLIKSTILGFVSNFGQVPKQLFTKPHPARTAAGKPLPGKDVSTPVSLPGHPQPFFYSLQSLRPSQVTVKDMYLFSLGSESPKGAIGHIVSTEKTILAVERNKVLLPPLWNRTFSWGFDDFSCCLGSYGSDKVLMTFENLAAWGRCLCAVCPSPTTIVTSGTSTVVCVWELSMTKGRPRGLRLRQALYGHTQAVTCLAASVTFSLLVSGSQDCTCILWDLDHLTHVTRLPAHREGISAITISDVSGTIVSCAGAHLSLWNVNGQPLASITTAWGPEGAITCCCLMEGPAWDTSQIIITGSQDGMVRVWKTEDVKMSVPGRPAGEEPPAQPPSPRGHKWEKNLALSRELDVSIALTGKPSKTSPAVTALAVSRNHTKLLVGDERGRIFCWSADG.

A compositionally biased stretch (basic and acidic residues) spans 1 to 18 (MEAEDLSKAEDRNEDPGS). Disordered stretches follow at residues 1–39 (MEAEDLSKAEDRNEDPGSKNEGQLAAVQPDVPHGGQSSS), 944–993 (SHTH…QDST), 1837–1869 (VGAESTRNTSSPEAAAEGDSTVEGLQAPTKAHP), and 2309–2335 (ALSSGRHKESQDKNDHISQTNAENQDE). Positions 981–993 (QAPQPLGESQDST) are enriched in polar residues. Residues 2314-2324 (RHKESQDKNDH) are compositionally biased toward basic and acidic residues. One can recognise a BEACH-type PH domain in the interval 2385 to 2510 (LDKEKVTQKF…DRSKAFKSFC (126 aa)). A BEACH domain is found at 2527-2821 (SLRRYPGSDR…QLFTKPHPAR (295 aa)). 6 WD repeats span residues 2863 to 2922 (MYLF…YGSD), 2923 to 2972 (KVLM…PRGL), 2973 to 3014 (RLRQ…LDHL), 3015 to 3057 (THVT…GQPL), 3058 to 3141 (ASIT…ELDV), and 3142 to 3184 (SIAL…SADG). The tract at residues 3107 to 3128 (SVPGRPAGEEPPAQPPSPRGHK) is disordered.

Interacts with HSP90AB1.

It localises to the early endosome. The protein localises to the endoplasmic reticulum. Its function is as follows. Plays a critical role in the regulation of cDC1-mediated cross-presentation of viral and tumor antigens in dendritic cells. Mechanistically, acts near the plasma membrane and interacts with endosomal membranes to promote endosomal-to-cytosol antigen trafficking. Also plays a role in B-cell survival through regulation of autophagy. In Homo sapiens (Human), this protein is WD repeat- and FYVE domain-containing protein 4 (WDFY4).